Consider the following 140-residue polypeptide: MIVLDTNVISELWKAEPDRAVLAWIDAQMIETLYLSAITVAELRFGLAAMPAGKRRTIFQNRLEGEVLPALAGRVLPFDLDASRSYADLMAQAKTSGKVIGKADGYIAATAVAHGFMVATRDTSPFEAAGLDIINPWEPA.

The region spanning 2–135 (IVLDTNVISE…FEAAGLDIIN (134 aa)) is the PINc domain. 2 residues coordinate Mg(2+): Asp5 and Asp104.

It belongs to the PINc/VapC protein family. The cofactor is Mg(2+).

In terms of biological role, toxic component of a type II toxin-antitoxin (TA) system. An RNase. Involved in plasmid stability. The polypeptide is VapC ribonuclease Y4jK (Sinorhizobium fredii (strain NBRC 101917 / NGR234)).